A 427-amino-acid polypeptide reads, in one-letter code: Dihydroorotase (427 aa).

His60 and His62 together coordinate Zn(2+). Substrate contacts are provided by residues 62 to 64 and Asn94; that span reads HLR. Residues Asp151, His178, and His231 each contribute to the Zn(2+) site. Asn277 contacts substrate. Asp304 serves as a coordination point for Zn(2+). The active site involves Asp304. Residues His308 and 322–323 each bind substrate; that span reads FG.

Belongs to the metallo-dependent hydrolases superfamily. DHOase family. Class I DHOase subfamily. It depends on Zn(2+) as a cofactor.

The enzyme catalyses (S)-dihydroorotate + H2O = N-carbamoyl-L-aspartate + H(+). The protein operates within pyrimidine metabolism; UMP biosynthesis via de novo pathway; (S)-dihydroorotate from bicarbonate: step 3/3. Catalyzes the reversible cyclization of carbamoyl aspartate to dihydroorotate. This Pelotomaculum thermopropionicum (strain DSM 13744 / JCM 10971 / SI) protein is Dihydroorotase.